A 445-amino-acid chain; its full sequence is GTPase Der (445 aa).

EngA-type G domains follow at residues 3–167 and 180–353; these read PVIA…YAGQ and IKIA…AAAM. GTP is bound by residues 9–16, 56–60, 119–122, 186–193, 233–237, and 298–301; these read GRPNVGKS, DTGGF, NKAE, DTAGL, and NKWD. Residues 354-438 form the KH-like domain; that stretch reads AKLPTPKLTR…PLRIEFRSSN (85 aa).

It belongs to the TRAFAC class TrmE-Era-EngA-EngB-Septin-like GTPase superfamily. EngA (Der) GTPase family. In terms of assembly, associates with the 50S ribosomal subunit.

GTPase that plays an essential role in the late steps of ribosome biogenesis. The chain is GTPase Der from Burkholderia ambifaria (strain MC40-6).